Reading from the N-terminus, the 538-residue chain is CTP synthase (538 aa).

The interval 1–270 (MSRTKFIFVT…DEVVLKTMGM (270 aa)) is amidoligase domain. S15 serves as a coordination point for CTP. S15 contacts UTP. 16 to 21 (SLGKGV) is a binding site for ATP. Residue Y56 coordinates L-glutamine. Residue D73 participates in ATP binding. Positions 73 and 143 each coordinate Mg(2+). Residues 150-152 (DIE), 190-195 (KTKPTQ), and K226 contribute to the CTP site. Residues 190-195 (KTKPTQ) and K226 each bind UTP. Residues 295-537 (QIAVVGKYIS…IRASVKYSKK (243 aa)) form the Glutamine amidotransferase type-1 domain. G357 contributes to the L-glutamine binding site. Residue C384 is the Nucleophile; for glutamine hydrolysis of the active site. Residues 385–388 (LGMQ), E408, and R465 each bind L-glutamine. Residues H510 and E512 contribute to the active site.

Belongs to the CTP synthase family. In terms of assembly, homotetramer.

The catalysed reaction is UTP + L-glutamine + ATP + H2O = CTP + L-glutamate + ADP + phosphate + 2 H(+). The enzyme catalyses L-glutamine + H2O = L-glutamate + NH4(+). It carries out the reaction UTP + NH4(+) + ATP = CTP + ADP + phosphate + 2 H(+). It participates in pyrimidine metabolism; CTP biosynthesis via de novo pathway; CTP from UDP: step 2/2. With respect to regulation, allosterically activated by GTP, when glutamine is the substrate; GTP has no effect on the reaction when ammonia is the substrate. The allosteric effector GTP functions by stabilizing the protein conformation that binds the tetrahedral intermediate(s) formed during glutamine hydrolysis. Inhibited by the product CTP, via allosteric rather than competitive inhibition. Catalyzes the ATP-dependent amination of UTP to CTP with either L-glutamine or ammonia as the source of nitrogen. Regulates intracellular CTP levels through interactions with the four ribonucleotide triphosphates. This chain is CTP synthase, found in Leptospira interrogans serogroup Icterohaemorrhagiae serovar copenhageni (strain Fiocruz L1-130).